Consider the following 134-residue polypeptide: MDLRTGEVITAPQAMNGVYTWEINNPLYFTITRHQQRPFLLNQDIITVQVRFNHNLRKELGIHKCFLNFQIWTTLQPQTGLFLRVFRYQVIKYLDNIGVISINNVIRAADHVLFNVIANTIECKLTHEIKFNVY.

The protein belongs to the geminiviridae replication enhancer protein family. As to quaternary structure, homooligomer. Interacts with the replication-associated protein (REP). Interacts with host proliferating cell nuclear antigen (PCNA). Interacts with host retinoblastoma-related protein 1 (RBR1), and may thereby deregulate the host cell cycle. Oligomerization and interaction with PCNA are necessary for optimal replication enhancement.

Functionally, increases viral DNA accumulation. Enhances infectivity and symptom expression. This chain is Replication enhancer protein, found in African cassava mosaic virus (isolate West Kenyan 844) (ACMV).